The following is a 251-amino-acid chain: Hydroxyacylglutathione hydrolase (251 aa).

Zn(2+)-binding residues include H53, H55, D57, H58, H110, D127, and H165.

Belongs to the metallo-beta-lactamase superfamily. Glyoxalase II family. As to quaternary structure, monomer. The cofactor is Zn(2+).

The catalysed reaction is an S-(2-hydroxyacyl)glutathione + H2O = a 2-hydroxy carboxylate + glutathione + H(+). Its pathway is secondary metabolite metabolism; methylglyoxal degradation; (R)-lactate from methylglyoxal: step 2/2. Functionally, thiolesterase that catalyzes the hydrolysis of S-D-lactoyl-glutathione to form glutathione and D-lactic acid. The polypeptide is Hydroxyacylglutathione hydrolase (Salmonella agona (strain SL483)).